A 156-amino-acid polypeptide reads, in one-letter code: Small ribosomal subunit protein uS7 (156 aa).

It belongs to the universal ribosomal protein uS7 family. In terms of assembly, part of the 30S ribosomal subunit. Contacts proteins S9 and S11.

Functionally, one of the primary rRNA binding proteins, it binds directly to 16S rRNA where it nucleates assembly of the head domain of the 30S subunit. Is located at the subunit interface close to the decoding center, probably blocks exit of the E-site tRNA. This is Small ribosomal subunit protein uS7 from Streptococcus uberis (strain ATCC BAA-854 / 0140J).